A 224-amino-acid polypeptide reads, in one-letter code: 7-cyano-7-deazaguanine synthase (224 aa).

12 to 22 (LSGGLDSSTVT) contributes to the ATP binding site. Zn(2+)-binding residues include Cys193, Cys201, Cys204, and Cys207.

Belongs to the QueC family. The cofactor is Zn(2+).

The enzyme catalyses 7-carboxy-7-deazaguanine + NH4(+) + ATP = 7-cyano-7-deazaguanine + ADP + phosphate + H2O + H(+). Its pathway is purine metabolism; 7-cyano-7-deazaguanine biosynthesis. Catalyzes the ATP-dependent conversion of 7-carboxy-7-deazaguanine (CDG) to 7-cyano-7-deazaguanine (preQ(0)). This is 7-cyano-7-deazaguanine synthase from Prochlorococcus marinus (strain AS9601).